The sequence spans 417 residues: Serine hydroxymethyltransferase 2 (417 aa).

(6S)-5,6,7,8-tetrahydrofolate-binding positions include L121 and 125–127 (GHL). At K230 the chain carries N6-(pyridoxal phosphate)lysine. 355 to 357 (SPF) serves as a coordination point for (6S)-5,6,7,8-tetrahydrofolate.

The protein belongs to the SHMT family. As to quaternary structure, homodimer. Requires pyridoxal 5'-phosphate as cofactor.

It localises to the cytoplasm. It catalyses the reaction (6R)-5,10-methylene-5,6,7,8-tetrahydrofolate + glycine + H2O = (6S)-5,6,7,8-tetrahydrofolate + L-serine. Its pathway is one-carbon metabolism; tetrahydrofolate interconversion. It participates in amino-acid biosynthesis; glycine biosynthesis; glycine from L-serine: step 1/1. Catalyzes the reversible interconversion of serine and glycine with tetrahydrofolate (THF) serving as the one-carbon carrier. This reaction serves as the major source of one-carbon groups required for the biosynthesis of purines, thymidylate, methionine, and other important biomolecules. Also exhibits THF-independent aldolase activity toward beta-hydroxyamino acids, producing glycine and aldehydes, via a retro-aldol mechanism. This Pseudomonas savastanoi pv. phaseolicola (strain 1448A / Race 6) (Pseudomonas syringae pv. phaseolicola (strain 1448A / Race 6)) protein is Serine hydroxymethyltransferase 2.